Consider the following 492-residue polypeptide: MO25-like protein 3 (492 aa).

The interval 442 to 492 is disordered; it reads SRAGIRFGETRNVKGSPRSRSQSPRPPTGPEPSPRTTSYQNVRFPPEDSSR. A compositionally biased stretch (pro residues) spans 465-474; the sequence is PRPPTGPEPS.

The protein belongs to the Mo25 family.

The protein is MO25-like protein 3 of Caenorhabditis briggsae.